Here is a 300-residue protein sequence, read N- to C-terminus: Protein THYLAKOID FORMATION 1, chloroplastic (300 aa).

Residues 1–67 constitute a chloroplast transit peptide; it reads MAATAISSLS…SNVTADVPPV (67 aa). The Chloroplast intermembrane segment spans residues 68-196; that stretch reads SETKSKFLKA…IAGRAGSKEG (129 aa). A helical membrane pass occupies residues 197–219; that stretch reads FSYSRFFAVGLFRLLELASATDP. Over 220–300 the chain is Cytoplasmic; it reads TVLDKLCASL…NPSFLVERKS (81 aa). Residues 239–268 are a coiled coil; sequence DLDVYRNLLSKLVQAKELLKEYVEREKKKQ.

It belongs to the THF1 family. As to quaternary structure, interacts with GPA1. As to expression, ubiquitous. Present at higher level in hypocotyls (at protein level). Ubiquitously expressed in all organs, in roots of both light-grown and dark-grown seedlings. Highly expressed in the root apical meristems.

It is found in the plastid. Its subcellular location is the chloroplast outer membrane. The protein resides in the chloroplast stroma. Involved in a dynamic process of vesicle-mediated thylakoid membrane biogenesis. Required for the normal organization of vesicles into mature thylakoid stacks and ultimately for leaf development. Also involved in a sugar-signaling mechanism in roots by mediating signaling between the plasma membrane and the plastid. Probably acts downstream of the plasma membrane-delimited heterotrimeric G-protein GPA1 in a D-glucose signaling pathway. The sequence is that of Protein THYLAKOID FORMATION 1, chloroplastic (THF1) from Arabidopsis thaliana (Mouse-ear cress).